A 287-amino-acid polypeptide reads, in one-letter code: Pantothenate synthetase (287 aa).

An ATP-binding site is contributed by 30–37; that stretch reads MGNLHSGH. The Proton donor role is filled by His-37. Residue Gln-61 coordinates (R)-pantoate. Gln-61 serves as a coordination point for beta-alanine. 149–152 contributes to the ATP binding site; the sequence is GEKD. Residue Gln-155 coordinates (R)-pantoate. Residues Val-178 and 186-189 contribute to the ATP site; that span reads LSSR.

It belongs to the pantothenate synthetase family. As to quaternary structure, homodimer.

It localises to the cytoplasm. The catalysed reaction is (R)-pantoate + beta-alanine + ATP = (R)-pantothenate + AMP + diphosphate + H(+). It participates in cofactor biosynthesis; (R)-pantothenate biosynthesis; (R)-pantothenate from (R)-pantoate and beta-alanine: step 1/1. Catalyzes the condensation of pantoate with beta-alanine in an ATP-dependent reaction via a pantoyl-adenylate intermediate. The sequence is that of Pantothenate synthetase from Pseudomonas putida (strain ATCC 47054 / DSM 6125 / CFBP 8728 / NCIMB 11950 / KT2440).